Reading from the N-terminus, the 399-residue chain is Lysosomal acid lipase/cholesteryl ester hydrolase (399 aa).

An N-terminal signal peptide occupies residues 1-27; it reads MKMRFLGLVVCLVLWTLHSEGSGGKLT. A propeptide spans 28–76 (removed in mature form); sequence AVDPETNMNVSEIISYWGFPSEEYLVETEDGYILCLNRIPHGRKNHSDK. 4 N-linked (GlcNAc...) asparagine glycosylation sites follow: N36, N72, N101, and N161. The region spanning 80-380 is the AB hydrolase-1 domain; the sequence is PVVFLQHGLL…EWEHLDFIWG (301 aa). Catalysis depends on S174, which acts as the Charge relay system. N-linked (GlcNAc...) asparagine glycans are attached at residues N273 and N321. The Charge relay system role is filled by H374.

It belongs to the AB hydrolase superfamily. Lipase family. As to quaternary structure, monomer. In terms of processing, glycosylation is not essential for catalytic activity. In terms of tissue distribution, most abundantly expressed in brain, lung, kidney and mammary gland, a moderate expression seen in placenta and expressed at low levels in the liver and heart.

It is found in the lysosome. The catalysed reaction is a sterol ester + H2O = a sterol + a fatty acid + H(+). It catalyses the reaction cholesteryl (9Z-octadecenoate) + H2O = cholesterol + (9Z)-octadecenoate + H(+). It carries out the reaction a triacylglycerol + H2O = a 1,2-diacylglycerol + a fatty acid + H(+). The enzyme catalyses 1,2-di-(9Z-octadecenoyl)-glycerol + (9Z)-octadecenoate + H(+) = 1,2,3-tri-(9Z-octadecenoyl)-glycerol + H2O. The catalysed reaction is a 1,2-diacylglycerol + H2O = a 1-acylglycerol + a fatty acid + H(+). It catalyses the reaction 1,2-di-(9Z-octadecenoyl)-glycerol + H2O = 1-(9Z-octadecenoyl)-glycerol + (9Z)-octadecenoate + H(+). It carries out the reaction a 1,3-diacylglycerol + H2O = a 1-acylglycerol + a fatty acid + H(+). The enzyme catalyses 1,3-di-(9Z-octadecenoyl)-glycerol + H2O = 1-(9Z-octadecenoyl)-glycerol + (9Z)-octadecenoate + H(+). Functionally, catalyzes the deacylation of cholesteryl ester core lipids of endocytosed low density lipoproteins to generate free fatty acids and cholesterol. Hydrolyzes triglycerides (1,2,3-triacylglycerol) and diglycerides (such as 1,2-diacylglycerol and 1,3-diacylglycerol) with preference for the acyl moieties at the sn-1 or sn-3 positions. The polypeptide is Lysosomal acid lipase/cholesteryl ester hydrolase (LIPA) (Homo sapiens (Human)).